The primary structure comprises 406 residues: Argininosuccinate synthase (406 aa).

ATP contacts are provided by residues 12-20 (AYSGGLDTS) and A39. The L-citrulline site is built by Y90 and S95. G120 is a binding site for ATP. Residues T122, N126, and D127 each contribute to the L-aspartate site. An L-citrulline-binding site is contributed by N126. L-citrulline-binding residues include R130, S179, S188, E264, and Y276.

It belongs to the argininosuccinate synthase family. Type 1 subfamily. As to quaternary structure, homotetramer.

It is found in the cytoplasm. It carries out the reaction L-citrulline + L-aspartate + ATP = 2-(N(omega)-L-arginino)succinate + AMP + diphosphate + H(+). It functions in the pathway amino-acid biosynthesis; L-arginine biosynthesis; L-arginine from L-ornithine and carbamoyl phosphate: step 2/3. This Geotalea uraniireducens (strain Rf4) (Geobacter uraniireducens) protein is Argininosuccinate synthase.